A 367-amino-acid polypeptide reads, in one-letter code: Leucine-rich repeat-containing protein 28 (367 aa).

9 LRR repeats span residues 16–36 (KHKN…ELLK), 42–63 (YLER…LAQK), 66–87 (NLVE…IGSL), 89–110 (KLQC…IGRL), 112–133 (ALRH…VGDL), 135–156 (ELQT…LHMC), 158–180 (SLQY…CQLP), 181–202 (SLNE…LGRS), and 204–226 (ELQY…LYNK).

This Homo sapiens (Human) protein is Leucine-rich repeat-containing protein 28 (LRRC28).